The primary structure comprises 216 residues: Oligoribonuclease (216 aa).

Residues 6–171 (VVWMDCEMTG…ADIKESIREL (166 aa)) enclose the Exonuclease domain. Residue Tyr-128 is part of the active site.

This sequence belongs to the oligoribonuclease family.

The protein localises to the cytoplasm. Functionally, 3'-to-5' exoribonuclease specific for small oligoribonucleotides. The protein is Oligoribonuclease of Nocardia farcinica (strain IFM 10152).